Consider the following 178-residue polypeptide: Cysteine-rich venom protein VAR3 (178 aa).

A signal peptide spans 1-22; it reads MILLKLYLTLAAILCQSRGTTS. An SCP domain is found at 41–169; that stretch reads NKHNDLRRTV…PLKYFLVCQY (129 aa). Disulfide bonds link Cys-77-Cys-156, Cys-95-Cys-170, and Cys-151-Cys-167.

Belongs to the CRISP family. In terms of processing, contains 8 disulfide bonds. As to expression, expressed by the venom gland.

It localises to the secreted. Its function is as follows. Blocks ryanodine receptors, and potassium channels. In Varanus acanthurus (Ridge-tailed monitor), this protein is Cysteine-rich venom protein VAR3.